Reading from the N-terminus, the 266-residue chain is Heat-inducible transcription repressor HrcA (266 aa).

This sequence belongs to the HrcA family.

In terms of biological role, negative regulator of class I heat shock genes (grpE-dnaK-dnaJ and groELS operons). Prevents heat-shock induction of these operons. The sequence is that of Heat-inducible transcription repressor HrcA from Helicobacter pylori (strain J99 / ATCC 700824) (Campylobacter pylori J99).